Here is a 301-residue protein sequence, read N- to C-terminus: Acetylglutamate kinase (301 aa).

Substrate contacts are provided by residues 68-69, Arg-90, and Asn-195; that span reads GG.

The protein belongs to the acetylglutamate kinase family. ArgB subfamily.

The protein localises to the cytoplasm. It carries out the reaction N-acetyl-L-glutamate + ATP = N-acetyl-L-glutamyl 5-phosphate + ADP. Its pathway is amino-acid biosynthesis; L-arginine biosynthesis; N(2)-acetyl-L-ornithine from L-glutamate: step 2/4. Catalyzes the ATP-dependent phosphorylation of N-acetyl-L-glutamate. The chain is Acetylglutamate kinase from Pseudomonas savastanoi pv. phaseolicola (strain 1448A / Race 6) (Pseudomonas syringae pv. phaseolicola (strain 1448A / Race 6)).